A 121-amino-acid polypeptide reads, in one-letter code: Putative iron-sulfur cluster insertion protein ErpA (121 aa).

Residues C49, C113, and C115 each coordinate iron-sulfur cluster.

The protein belongs to the HesB/IscA family. In terms of assembly, homodimer. Iron-sulfur cluster serves as cofactor.

Required for insertion of 4Fe-4S clusters. This chain is Putative iron-sulfur cluster insertion protein ErpA, found in Methylibium petroleiphilum (strain ATCC BAA-1232 / LMG 22953 / PM1).